The following is a 108-amino-acid chain: MALWMHLLPLLALLALWGPEPAPAFVNQHLCGPHLVEALYLVCGERGFFYAPKTRREAEDLQVGQVELGGGSITGSLPPLEGPMQKRGVVDQCCTSICSLYQLQNYCN.

The first 24 residues, 1–24 (MALWMHLLPLLALLALWGPEPAPA), serve as a signal peptide directing secretion. 3 cysteine pairs are disulfide-bonded: Cys31–Cys94, Cys43–Cys107, and Cys93–Cys98. Residues 57 to 85 (EAEDLQVGQVELGGGSITGSLPPLEGPMQ) constitute a propeptide, c peptide.

It belongs to the insulin family. Heterodimer of a B chain and an A chain linked by two disulfide bonds.

The protein resides in the secreted. Its function is as follows. Insulin decreases blood glucose concentration. It increases cell permeability to monosaccharides, amino acids and fatty acids. It accelerates glycolysis, the pentose phosphate cycle, and glycogen synthesis in liver. The sequence is that of Insulin (INS) from Aotus trivirgatus (Three-striped night monkey).